The following is a 162-amino-acid chain: Ribonuclease P protein component (162 aa).

A disordered region spans residues 1–63; the sequence is MDEKDLATQP…PPAAGGKLLS (63 aa). Residues 21–38 are compositionally biased toward basic and acidic residues; that stretch reads GPHEDPRRQEGVEAEKAE.

Belongs to the RnpA family. Consists of a catalytic RNA component (M1 or rnpB) and a protein subunit.

The enzyme catalyses Endonucleolytic cleavage of RNA, removing 5'-extranucleotides from tRNA precursor.. In terms of biological role, RNaseP catalyzes the removal of the 5'-leader sequence from pre-tRNA to produce the mature 5'-terminus. It can also cleave other RNA substrates such as 4.5S RNA. The protein component plays an auxiliary but essential role in vivo by binding to the 5'-leader sequence and broadening the substrate specificity of the ribozyme. The chain is Ribonuclease P protein component from Thermus scotoductus.